A 199-amino-acid chain; its full sequence is NADH-quinone oxidoreductase subunit C (199 aa).

Belongs to the complex I 30 kDa subunit family. In terms of assembly, NDH-1 is composed of 14 different subunits. Subunits NuoB, C, D, E, F, and G constitute the peripheral sector of the complex.

It localises to the cell inner membrane. It carries out the reaction a quinone + NADH + 5 H(+)(in) = a quinol + NAD(+) + 4 H(+)(out). Its function is as follows. NDH-1 shuttles electrons from NADH, via FMN and iron-sulfur (Fe-S) centers, to quinones in the respiratory chain. The immediate electron acceptor for the enzyme in this species is believed to be ubiquinone. Couples the redox reaction to proton translocation (for every two electrons transferred, four hydrogen ions are translocated across the cytoplasmic membrane), and thus conserves the redox energy in a proton gradient. This Rhodobacter capsulatus (Rhodopseudomonas capsulata) protein is NADH-quinone oxidoreductase subunit C.